We begin with the raw amino-acid sequence, 231 residues long: Protein C activator (231 aa).

The region spanning Val1–Ser222 is the Peptidase S1 domain. Intrachain disulfides connect Cys7–Cys138, Cys25–Cys41, Cys73–Cys229, Cys117–Cys183, Cys149–Cys162, and Cys173–Cys198. A glycan (N-linked (GlcNAc...) asparagine) is linked at Asn21. Catalysis depends on His40, which acts as the Charge relay system. Residue Asn78 is glycosylated (N-linked (GlcNAc...) asparagine). The active-site Charge relay system is the Asp85. A glycan (N-linked (GlcNAc...) asparagine) is linked at Asn129. Catalysis depends on Ser177, which acts as the Charge relay system.

This sequence belongs to the peptidase S1 family. Snake venom subfamily. In terms of assembly, monomer. Expressed by the venom gland.

Its subcellular location is the secreted. In terms of biological role, snake venom serine protease that selectively cleaves the heavy chain of protein C (PROC). This activation is thrombomodulin-independent. This is Protein C activator from Agkistrodon contortrix contortrix (Southern copperhead).